The sequence spans 78 residues: Putative membrane protein insertion efficiency factor (78 aa).

The protein belongs to the UPF0161 family.

The protein localises to the cell inner membrane. Could be involved in insertion of integral membrane proteins into the membrane. The chain is Putative membrane protein insertion efficiency factor from Prochlorococcus marinus subsp. pastoris (strain CCMP1986 / NIES-2087 / MED4).